Reading from the N-terminus, the 421-residue chain is Ig-like V-type domain-containing protein FAM187A (421 aa).

A signal peptide spans 1–18; the sequence is MNLAHTTVLLWAWGSLQA. Over 19–377 the chain is Extracellular; it reads FEIVEKENIF…VSFSDPETRA (359 aa). In terms of domain architecture, Ig-like V-type spans 268-362; sequence PWLPQVPIQF…IAGFRLGVTS (95 aa). Cysteine 290 and cysteine 346 are oxidised to a cystine. An N-linked (GlcNAc...) asparagine glycan is attached at asparagine 318. A helical membrane pass occupies residues 378 to 398; it reads ALGLILIGYMLITVIFISIHL. Residues 399 to 421 are Cytoplasmic-facing; sequence CRCCCYLFRFCPNFSPRLSRPQL.

The protein belongs to the FAM187 family.

The protein localises to the membrane. The protein is Ig-like V-type domain-containing protein FAM187A (FAM187A) of Bos taurus (Bovine).